Reading from the N-terminus, the 475-residue chain is tRNA-2-methylthio-N(6)-dimethylallyladenosine synthase (475 aa).

An MTTase N-terminal domain is found at 2–119 (AKLHITTWGC…LPEMINQIRS (118 aa)). [4Fe-4S] cluster is bound by residues Cys-11, Cys-48, Cys-82, Cys-156, Cys-160, and Cys-163. The Radical SAM core domain occupies 142 to 374 (KAEGPTAFVS…QQRINHQAMQ (233 aa)). Residues 377–440 (RLMLGTEQRI…SNSLRGEVIR (64 aa)) form the TRAM domain.

The protein belongs to the methylthiotransferase family. MiaB subfamily. As to quaternary structure, monomer. It depends on [4Fe-4S] cluster as a cofactor.

Its subcellular location is the cytoplasm. It carries out the reaction N(6)-dimethylallyladenosine(37) in tRNA + (sulfur carrier)-SH + AH2 + 2 S-adenosyl-L-methionine = 2-methylsulfanyl-N(6)-dimethylallyladenosine(37) in tRNA + (sulfur carrier)-H + 5'-deoxyadenosine + L-methionine + A + S-adenosyl-L-homocysteine + 2 H(+). In terms of biological role, catalyzes the methylthiolation of N6-(dimethylallyl)adenosine (i(6)A), leading to the formation of 2-methylthio-N6-(dimethylallyl)adenosine (ms(2)i(6)A) at position 37 in tRNAs that read codons beginning with uridine. The sequence is that of tRNA-2-methylthio-N(6)-dimethylallyladenosine synthase from Haemophilus ducreyi (strain 35000HP / ATCC 700724).